A 184-amino-acid polypeptide reads, in one-letter code: NADH-quinone oxidoreductase subunit B 1 (184 aa).

[4Fe-4S] cluster-binding residues include Cys37, Cys38, Cys103, and Cys132.

It belongs to the complex I 20 kDa subunit family. As to quaternary structure, NDH-1 is composed of 14 different subunits. Subunits NuoB, C, D, E, F, and G constitute the peripheral sector of the complex. Requires [4Fe-4S] cluster as cofactor.

It localises to the cell membrane. The catalysed reaction is a quinone + NADH + 5 H(+)(in) = a quinol + NAD(+) + 4 H(+)(out). Its function is as follows. NDH-1 shuttles electrons from NADH, via FMN and iron-sulfur (Fe-S) centers, to quinones in the respiratory chain. The immediate electron acceptor for the enzyme in this species is believed to be a menaquinone. Couples the redox reaction to proton translocation (for every two electrons transferred, four hydrogen ions are translocated across the cytoplasmic membrane), and thus conserves the redox energy in a proton gradient. The chain is NADH-quinone oxidoreductase subunit B 1 from Streptomyces griseus subsp. griseus (strain JCM 4626 / CBS 651.72 / NBRC 13350 / KCC S-0626 / ISP 5235).